The following is a 289-amino-acid chain: Probable porphobilinogen deaminase (289 aa).

C234 carries the S-(dipyrrolylmethanemethyl)cysteine modification.

Belongs to the HMBS family. Requires dipyrromethane as cofactor.

It catalyses the reaction 4 porphobilinogen + H2O = hydroxymethylbilane + 4 NH4(+). It participates in porphyrin-containing compound metabolism; protoporphyrin-IX biosynthesis; coproporphyrinogen-III from 5-aminolevulinate: step 2/4. Functionally, tetrapolymerization of the monopyrrole PBG into the hydroxymethylbilane pre-uroporphyrinogen in several discrete steps. The chain is Probable porphobilinogen deaminase (hemC) from Archaeoglobus fulgidus (strain ATCC 49558 / DSM 4304 / JCM 9628 / NBRC 100126 / VC-16).